The chain runs to 295 residues: Shikimate dehydrogenase (NADP(+)) (295 aa).

Residues 21–23 (SLS) and Thr-68 each bind shikimate. Lys-72 acts as the Proton acceptor in catalysis. Shikimate contacts are provided by Asn-93 and Asp-108. NADP(+) is bound by residues 132-136 (GAGGA), 156-161 (NRTPER), and Leu-228. Tyr-230 lines the shikimate pocket. Gly-251 is an NADP(+) binding site.

It belongs to the shikimate dehydrogenase family. Homodimer.

The enzyme catalyses shikimate + NADP(+) = 3-dehydroshikimate + NADPH + H(+). The protein operates within metabolic intermediate biosynthesis; chorismate biosynthesis; chorismate from D-erythrose 4-phosphate and phosphoenolpyruvate: step 4/7. Functionally, involved in the biosynthesis of the chorismate, which leads to the biosynthesis of aromatic amino acids. Catalyzes the reversible NADPH linked reduction of 3-dehydroshikimate (DHSA) to yield shikimate (SA). This is Shikimate dehydrogenase (NADP(+)) from Moorella thermoacetica (strain ATCC 39073 / JCM 9320).